The chain runs to 721 residues: Ribosomal RNA large subunit methyltransferase K/L (721 aa).

The THUMP domain maps to 56-167 (GMYKACLWSR…REVVTVSIDL (112 aa)).

It belongs to the methyltransferase superfamily. RlmKL family.

The protein resides in the cytoplasm. The enzyme catalyses guanosine(2445) in 23S rRNA + S-adenosyl-L-methionine = N(2)-methylguanosine(2445) in 23S rRNA + S-adenosyl-L-homocysteine + H(+). The catalysed reaction is guanosine(2069) in 23S rRNA + S-adenosyl-L-methionine = N(2)-methylguanosine(2069) in 23S rRNA + S-adenosyl-L-homocysteine + H(+). Its function is as follows. Specifically methylates the guanine in position 2445 (m2G2445) and the guanine in position 2069 (m7G2069) of 23S rRNA. This Marinomonas sp. (strain MWYL1) protein is Ribosomal RNA large subunit methyltransferase K/L.